A 745-amino-acid polypeptide reads, in one-letter code: Serine/threonine-protein kinase GG21441 (745 aa).

A disordered region spans residues 49-73 (RNQQQNVQKDFDSHNRDCDSPVSST). Basic and acidic residues predominate over residues 57-67 (KDFDSHNRDCD). Doublecortin domains follow at residues 159–245 (LRIK…VEYN) and 315–398 (RIVT…AEDF). Residues 479-737 (YTLGRIIGDG…SEDILDHYWT (259 aa)) enclose the Protein kinase domain. ATP contacts are provided by residues 485–493 (IGDGNFAIV) and K508. The active-site Proton acceptor is D600.

This sequence belongs to the protein kinase superfamily. CAMK Ser/Thr protein kinase family. CaMK subfamily.

The catalysed reaction is L-seryl-[protein] + ATP = O-phospho-L-seryl-[protein] + ADP + H(+). It catalyses the reaction L-threonyl-[protein] + ATP = O-phospho-L-threonyl-[protein] + ADP + H(+). The protein is Serine/threonine-protein kinase GG21441 of Drosophila erecta (Fruit fly).